A 1058-amino-acid polypeptide reads, in one-letter code: Carbamoyl phosphate synthase large chain (1058 aa).

Residues 1–401 form a carboxyphosphate synthetic domain region; sequence MPKRTDIQKI…SLLKACRSLE (401 aa). Arg129, Arg169, Gly175, Gly176, Arg208, Ile210, Glu215, Gly241, Ile242, His243, Gln284, and Glu298 together coordinate ATP. One can recognise an ATP-grasp 1 domain in the interval 133 to 327; the sequence is KQLMEELEQP…IAKLAAKIAV (195 aa). Residues Gln284, Glu298, and Asn300 each coordinate Mg(2+). Gln284, Glu298, and Asn300 together coordinate Mn(2+). Residues 402–546 form an oligomerization domain region; sequence IGVHHNEIPE…YSTYGWENES (145 aa). Residues 547 to 929 are carbamoyl phosphate synthetic domain; the sequence is IRSDKESVLV…ALYKAFEASY (383 aa). One can recognise an ATP-grasp 2 domain in the interval 671–861; the sequence is EQALKELDIP…MAQVATKLIL (191 aa). ATP is bound by residues Arg707, Ser746, Ile748, Glu752, Gly777, Val778, His779, Ser780, Gln820, and Glu832. Mg(2+)-binding residues include Gln820, Glu832, and Asn834. Gln820, Glu832, and Asn834 together coordinate Mn(2+). The 129-residue stretch at 930–1058 folds into the MGS-like domain; sequence LHLPTFGNVV…ESRSFVTEAI (129 aa). The segment at 930 to 1058 is allosteric domain; the sequence is LHLPTFGNVV…ESRSFVTEAI (129 aa).

Belongs to the CarB family. Composed of two chains; the small (or glutamine) chain promotes the hydrolysis of glutamine to ammonia, which is used by the large (or ammonia) chain to synthesize carbamoyl phosphate. Tetramer of heterodimers (alpha,beta)4. It depends on Mg(2+) as a cofactor. Requires Mn(2+) as cofactor.

The enzyme catalyses hydrogencarbonate + L-glutamine + 2 ATP + H2O = carbamoyl phosphate + L-glutamate + 2 ADP + phosphate + 2 H(+). It carries out the reaction hydrogencarbonate + NH4(+) + 2 ATP = carbamoyl phosphate + 2 ADP + phosphate + 2 H(+). Its pathway is amino-acid biosynthesis; L-arginine biosynthesis; carbamoyl phosphate from bicarbonate: step 1/1. The protein operates within pyrimidine metabolism; UMP biosynthesis via de novo pathway; (S)-dihydroorotate from bicarbonate: step 1/3. Functionally, large subunit of the glutamine-dependent carbamoyl phosphate synthetase (CPSase). CPSase catalyzes the formation of carbamoyl phosphate from the ammonia moiety of glutamine, carbonate, and phosphate donated by ATP, constituting the first step of 2 biosynthetic pathways, one leading to arginine and/or urea and the other to pyrimidine nucleotides. The large subunit (synthetase) binds the substrates ammonia (free or transferred from glutamine from the small subunit), hydrogencarbonate and ATP and carries out an ATP-coupled ligase reaction, activating hydrogencarbonate by forming carboxy phosphate which reacts with ammonia to form carbamoyl phosphate. This Streptococcus pneumoniae (strain JJA) protein is Carbamoyl phosphate synthase large chain.